Reading from the N-terminus, the 266-residue chain is Pre-mRNA-splicing factor PRP11 (266 aa).

Positions Met-1–Gln-21 are disordered. The segment at Leu-66–Arg-96 adopts a Matrin-type zinc-finger fold.

This sequence belongs to the SF3A2 family. In terms of assembly, belongs to the CWC complex (or CEF1-associated complex), a spliceosome sub-complex reminiscent of a late-stage spliceosome composed of the U2, U5 and U6 snRNAs and at least BUD13, BUD31, BRR2, CDC40, CEF1, CLF1, CUS1, CWC2, CWC15, CWC21, CWC22, CWC23, CWC24, CWC25, CWC27, ECM2, HSH155, IST3, ISY1, LEA1, MSL1, NTC20, PRP8, PRP9, PRP11, PRP19, PRP21, PRP22, PRP45, PRP46, SLU7, SMB1, SMD1, SMD2, SMD3, SMX2, SMX3, SNT309, SNU114, SPP2, SYF1, SYF2, RSE1 and YJU2. Interacts with CUS2.

It localises to the nucleus. Its function is as follows. mRNA splicing factors, PRP9, PRP11, and PRP21, are necessary for addition of the U2 snRNP to the pre-mRNA in an early step of spliceosome assembly. The protein is Pre-mRNA-splicing factor PRP11 (PRP11) of Saccharomyces cerevisiae (strain ATCC 204508 / S288c) (Baker's yeast).